Consider the following 229-residue polypeptide: RNA pyrophosphohydrolase (229 aa).

In terms of domain architecture, Nudix hydrolase spans 6–149 (GFRPNVGIIL…KRGVYEMALT (144 aa)). The Nudix box motif lies at 38–59 (GGIDRGETPEQAMFRELHEEVG). Residues 168 to 229 (SGMRPREAHE…QVLHPDPGKA (62 aa)) form a disordered region.

It belongs to the Nudix hydrolase family. RppH subfamily. A divalent metal cation is required as a cofactor.

Functionally, accelerates the degradation of transcripts by removing pyrophosphate from the 5'-end of triphosphorylated RNA, leading to a more labile monophosphorylated state that can stimulate subsequent ribonuclease cleavage. This chain is RNA pyrophosphohydrolase, found in Delftia acidovorans (strain DSM 14801 / SPH-1).